The following is a 313-amino-acid chain: MLDNVLRIATRQSPLALWQAHYVKDKLMASHPGLVVELVPMVTRGDVILDTPLAKVGGKGLFVKELEVALLENRADIAVHSMKDVPVEFPQGLGLVTICEREDPRDAFVSNNYDNLDALPAGSIVGTSSLRRQCQLAERRPDLIIRSLRGNVGTRLSKLDNGEYDAIILAVAGLKRLGLESRIRAALPPEISLPAVGQGAVGIECRLDDTRTRELLAALNHHETALRVTAERAMNTRLEGGCQVPIGSYAELIDGEIWLRALVGAPDGSQIIRGERRGAPQDAEQMGISLAEELLNNGAREILAEVYNGDAPA.

Cysteine 242 is subject to S-(dipyrrolylmethanemethyl)cysteine.

It belongs to the HMBS family. Monomer. Requires dipyrromethane as cofactor.

The enzyme catalyses 4 porphobilinogen + H2O = hydroxymethylbilane + 4 NH4(+). Its pathway is porphyrin-containing compound metabolism; protoporphyrin-IX biosynthesis; coproporphyrinogen-III from 5-aminolevulinate: step 2/4. In terms of biological role, tetrapolymerization of the monopyrrole PBG into the hydroxymethylbilane pre-uroporphyrinogen in several discrete steps. The protein is Porphobilinogen deaminase of Escherichia coli O7:K1 (strain IAI39 / ExPEC).